The chain runs to 178 residues: Large ribosomal subunit protein uL6 (178 aa).

It belongs to the universal ribosomal protein uL6 family. Part of the 50S ribosomal subunit.

Functionally, this protein binds to the 23S rRNA, and is important in its secondary structure. It is located near the subunit interface in the base of the L7/L12 stalk, and near the tRNA binding site of the peptidyltransferase center. The polypeptide is Large ribosomal subunit protein uL6 (Maridesulfovibrio salexigens (strain ATCC 14822 / DSM 2638 / NCIMB 8403 / VKM B-1763) (Desulfovibrio salexigens)).